The chain runs to 233 residues: Aspartate/glutamate leucyltransferase (233 aa).

The protein belongs to the R-transferase family. Bpt subfamily.

The protein resides in the cytoplasm. The catalysed reaction is N-terminal L-glutamyl-[protein] + L-leucyl-tRNA(Leu) = N-terminal L-leucyl-L-glutamyl-[protein] + tRNA(Leu) + H(+). It catalyses the reaction N-terminal L-aspartyl-[protein] + L-leucyl-tRNA(Leu) = N-terminal L-leucyl-L-aspartyl-[protein] + tRNA(Leu) + H(+). Functionally, functions in the N-end rule pathway of protein degradation where it conjugates Leu from its aminoacyl-tRNA to the N-termini of proteins containing an N-terminal aspartate or glutamate. This chain is Aspartate/glutamate leucyltransferase, found in Vibrio parahaemolyticus serotype O3:K6 (strain RIMD 2210633).